The following is a 63-amino-acid chain: Large ribosomal subunit protein bL28 (63 aa).

Belongs to the bacterial ribosomal protein bL28 family.

The sequence is that of Large ribosomal subunit protein bL28 from Heliobacterium modesticaldum (strain ATCC 51547 / Ice1).